We begin with the raw amino-acid sequence, 84 residues long: Acyl carrier protein homolog (84 aa).

Positions 4–79 (HEILLKIKEI…DLVLEVKNLL (76 aa)) constitute a Carrier domain. Residue Ser-39 is modified to O-(pantetheine 4'-phosphoryl)serine.

In terms of processing, 4'-phosphopantetheine is transferred from CoA to a specific serine of the apo-ACP-like protein.

It participates in lipid metabolism; fatty acid biosynthesis. Its function is as follows. Carrier of the growing fatty acid chain in fatty acid biosynthesis. This Mycoplasma genitalium (strain ATCC 33530 / DSM 19775 / NCTC 10195 / G37) (Mycoplasmoides genitalium) protein is Acyl carrier protein homolog.